A 553-amino-acid polypeptide reads, in one-letter code: CTP synthase (553 aa).

Residues 1–270 (MTKYVFVTGG…DRLICEELRL (270 aa)) form an amidoligase domain region. Ser-13 serves as a coordination point for CTP. Ser-13 is a UTP binding site. ATP-binding positions include 14 to 19 (SLGKGI) and Asp-71. Residues Asp-71 and Glu-144 each contribute to the Mg(2+) site. CTP-binding positions include 151–153 (DIE), 191–196 (KTKPTQ), and Lys-227. UTP contacts are provided by residues 191 to 196 (KTKPTQ) and Lys-227. In terms of domain architecture, Glutamine amidotransferase type-1 spans 295–547 (TIGMVGKYVD…VQAALACQQT (253 aa)). Residue Gly-356 coordinates L-glutamine. Cys-383 functions as the Nucleophile; for glutamine hydrolysis in the catalytic mechanism. L-glutamine-binding positions include 384-387 (LGMQ), Glu-407, and Arg-473. Catalysis depends on residues His-520 and Glu-522.

The protein belongs to the CTP synthase family. As to quaternary structure, homotetramer.

The catalysed reaction is UTP + L-glutamine + ATP + H2O = CTP + L-glutamate + ADP + phosphate + 2 H(+). It carries out the reaction L-glutamine + H2O = L-glutamate + NH4(+). The enzyme catalyses UTP + NH4(+) + ATP = CTP + ADP + phosphate + 2 H(+). It functions in the pathway pyrimidine metabolism; CTP biosynthesis via de novo pathway; CTP from UDP: step 2/2. Its activity is regulated as follows. Allosterically activated by GTP, when glutamine is the substrate; GTP has no effect on the reaction when ammonia is the substrate. The allosteric effector GTP functions by stabilizing the protein conformation that binds the tetrahedral intermediate(s) formed during glutamine hydrolysis. Inhibited by the product CTP, via allosteric rather than competitive inhibition. Functionally, catalyzes the ATP-dependent amination of UTP to CTP with either L-glutamine or ammonia as the source of nitrogen. Regulates intracellular CTP levels through interactions with the four ribonucleotide triphosphates. The polypeptide is CTP synthase (Burkholderia mallei (strain NCTC 10229)).